We begin with the raw amino-acid sequence, 527 residues long: T-complex protein 1 subunit delta (527 aa).

The protein belongs to the TCP-1 chaperonin family. In terms of assembly, heterooligomeric complex of about 850 to 900 kDa that forms two stacked rings, 12 to 16 nm in diameter.

Its subcellular location is the cytoplasm. In terms of biological role, molecular chaperone; assists the folding of proteins upon ATP hydrolysis. Known to play a role, in vitro, in the folding of actin and tubulin. The chain is T-complex protein 1 subunit delta (cct4) from Schizosaccharomyces pombe (strain 972 / ATCC 24843) (Fission yeast).